The sequence spans 465 residues: uncharacterized protein (465 aa).

Positions G13 to E71 constitute a TRAM domain. C84, C90, C93, and C171 together coordinate [4Fe-4S] cluster. Residues Q294, Y324, E345, and D391 each coordinate S-adenosyl-L-methionine. The active-site Nucleophile is C418.

This sequence belongs to the class I-like SAM-binding methyltransferase superfamily. RNA M5U methyltransferase family.

This is an uncharacterized protein from Parasynechococcus marenigrum (strain WH8102).